A 104-amino-acid chain; its full sequence is N(2)-fixation sustaining protein CowN (104 aa).

This sequence belongs to the CowN family.

In terms of biological role, is required to sustain N(2)-dependent growth in the presence of low levels of carbon monoxide (CO). Probably acts by protecting the N(2) fixation ability of the nitrogenase complex, which is inactivated in the presence of CO. This is N(2)-fixation sustaining protein CowN from Arcobacter nitrofigilis (strain ATCC 33309 / DSM 7299 / CCUG 15893 / LMG 7604 / NCTC 12251 / CI) (Campylobacter nitrofigilis).